The sequence spans 334 residues: D-alanine--D-alanine ligase (334 aa).

The 207-residue stretch at 121–327 (KLWYDALDIP…FSEFLVQCVT (207 aa)) folds into the ATP-grasp domain. 151–206 (AFGHWGSIFVKAARQGSSVGCYKVTTEDQIAPAIEAAFGFSEQVLVEQAVKPRELE) provides a ligand contact to ATP. Residues Asp-281, Glu-294, and Asn-296 each coordinate Mg(2+).

Belongs to the D-alanine--D-alanine ligase family. Requires Mg(2+) as cofactor. It depends on Mn(2+) as a cofactor.

It localises to the cytoplasm. It catalyses the reaction 2 D-alanine + ATP = D-alanyl-D-alanine + ADP + phosphate + H(+). The protein operates within cell wall biogenesis; peptidoglycan biosynthesis. Cell wall formation. The sequence is that of D-alanine--D-alanine ligase from Vibrio cholerae serotype O1 (strain ATCC 39315 / El Tor Inaba N16961).